The following is a 478-amino-acid chain: Cytochrome c-552 (478 aa).

The signal sequence occupies residues 1–26 (MARKTLRARRFFSLIFPFFFITSVYA). Histidine 94 provides a ligand contact to heme c. The heme site is built by cysteine 122, cysteine 125, and lysine 126. Cysteine 160, cysteine 163, histidine 164, cysteine 209, cysteine 212, and histidine 213 together coordinate heme c. Positions 215, 216, 261, and 263 each coordinate Ca(2+). Tyrosine 216 provides a ligand contact to substrate. Histidine 264 provides a ligand contact to substrate. Histidine 275, cysteine 282, cysteine 285, histidine 286, histidine 301, cysteine 314, cysteine 317, histidine 318, and histidine 393 together coordinate heme c.

It belongs to the cytochrome c-552 family. Ca(2+) is required as a cofactor. The cofactor is heme c.

It is found in the periplasm. It catalyses the reaction 6 Fe(III)-[cytochrome c] + NH4(+) + 2 H2O = 6 Fe(II)-[cytochrome c] + nitrite + 8 H(+). Its pathway is nitrogen metabolism; nitrate reduction (assimilation). Its function is as follows. Catalyzes the reduction of nitrite to ammonia, consuming six electrons in the process. The polypeptide is Cytochrome c-552 (Salmonella paratyphi C (strain RKS4594)).